The chain runs to 88 residues: Protein U62 (88 aa).

This Elephantid herpesvirus 1 (isolate Asian elephant/Berlin/Kiba/1998) (EIHV-1) protein is Protein U62.